We begin with the raw amino-acid sequence, 127 residues long: Small ribosomal subunit protein uS11 (127 aa).

It belongs to the universal ribosomal protein uS11 family. Part of the 30S ribosomal subunit.

Functionally, located on the platform of the 30S subunit. The polypeptide is Small ribosomal subunit protein uS11 (Natronomonas pharaonis (strain ATCC 35678 / DSM 2160 / CIP 103997 / JCM 8858 / NBRC 14720 / NCIMB 2260 / Gabara) (Halobacterium pharaonis)).